The primary structure comprises 572 residues: Phosphoenolpyruvate-protein phosphotransferase (572 aa).

Residue histidine 191 is the Tele-phosphohistidine intermediate of the active site. Arginine 298 and arginine 334 together coordinate phosphoenolpyruvate. Mg(2+) contacts are provided by glutamate 433 and aspartate 457. Phosphoenolpyruvate-binding positions include 456-457 and arginine 467; that span reads ND. Catalysis depends on cysteine 504, which acts as the Proton donor.

Belongs to the PEP-utilizing enzyme family. In terms of assembly, homodimer. It depends on Mg(2+) as a cofactor.

It is found in the cytoplasm. The enzyme catalyses L-histidyl-[protein] + phosphoenolpyruvate = N(pros)-phospho-L-histidyl-[protein] + pyruvate. In terms of biological role, general (non sugar-specific) component of the phosphoenolpyruvate-dependent sugar phosphotransferase system (sugar PTS). This major carbohydrate active-transport system catalyzes the phosphorylation of incoming sugar substrates concomitantly with their translocation across the cell membrane. Enzyme I transfers the phosphoryl group from phosphoenolpyruvate (PEP) to the phosphoryl carrier protein (HPr). In Staphylococcus epidermidis (strain ATCC 35984 / DSM 28319 / BCRC 17069 / CCUG 31568 / BM 3577 / RP62A), this protein is Phosphoenolpyruvate-protein phosphotransferase (ptsI).